The following is a 229-amino-acid chain: Cytidylate kinase (229 aa).

ATP is bound at residue 12 to 20 (GPSGSGKGT).

It belongs to the cytidylate kinase family. Type 1 subfamily.

Its subcellular location is the cytoplasm. It carries out the reaction CMP + ATP = CDP + ADP. It catalyses the reaction dCMP + ATP = dCDP + ADP. The polypeptide is Cytidylate kinase (Pseudomonas fluorescens (strain SBW25)).